Reading from the N-terminus, the 764-residue chain is Protein translocase subunit SecA 2 (764 aa).

ATP-binding positions include Gln-83, Gly-101 to Thr-105, and Asp-490.

The protein belongs to the SecA family. Monomer and homodimer. Part of the essential Sec protein translocation apparatus which comprises SecA, SecYEG and auxiliary proteins SecDF. Other proteins may also be involved.

It is found in the cell membrane. The protein localises to the cytoplasm. The catalysed reaction is ATP + H2O + cellular proteinSide 1 = ADP + phosphate + cellular proteinSide 2.. Functionally, part of the Sec protein translocase complex. Interacts with the SecYEG preprotein conducting channel. Has a central role in coupling the hydrolysis of ATP to the transfer of proteins into and across the cell membrane, serving as an ATP-driven molecular motor driving the stepwise translocation of polypeptide chains across the membrane. This chain is Protein translocase subunit SecA 2, found in Corynebacterium diphtheriae (strain ATCC 700971 / NCTC 13129 / Biotype gravis).